We begin with the raw amino-acid sequence, 507 residues long: ATP synthase subunit alpha, chloroplastic (507 aa).

ATP is bound at residue 170-177 (GDRQTGKT). At Thr257 the chain carries Phosphothreonine.

The protein belongs to the ATPase alpha/beta chains family. As to quaternary structure, F-type ATPases have 2 components, CF(1) - the catalytic core - and CF(0) - the membrane proton channel. CF(1) has five subunits: alpha(3), beta(3), gamma(1), delta(1), epsilon(1). CF(0) has four main subunits: a, b, b' and c.

It is found in the plastid. The protein resides in the chloroplast thylakoid membrane. It carries out the reaction ATP + H2O + 4 H(+)(in) = ADP + phosphate + 5 H(+)(out). Produces ATP from ADP in the presence of a proton gradient across the membrane. The alpha chain is a regulatory subunit. The protein is ATP synthase subunit alpha, chloroplastic of Barbarea verna (Land cress).